The chain runs to 140 residues: Oleosin Cor a 13 (140 aa).

2 consecutive transmembrane segments (helical) span residues 31 to 51 (GSLL…LTLA) and 75 to 95 (GFLA…WIYR).

It belongs to the oleosin family. In terms of tissue distribution, expressed in seeds.

It localises to the lipid droplet. It is found in the membrane. Its function is as follows. May have a structural role to stabilize the lipid body during desiccation of the seed by preventing coalescence of the oil. Probably interacts with both lipid and phospholipid moieties of lipid bodies. May also provide recognition signals for specific lipase anchorage in lipolysis during seedling growth. The polypeptide is Oleosin Cor a 13 (Corylus avellana (European hazel)).